The chain runs to 228 residues: Cytochrome c oxidase subunit 2 (228 aa).

The Mitochondrial intermembrane segment spans residues 1–14; sequence MPHASQLSLQEAMG. The chain crosses the membrane as a helical span at residues 15 to 45; it reads PTMEEVIFLHDHVLLLTCLMTMVITMFTLTA. The Mitochondrial matrix portion of the chain corresponds to 46 to 59; the sequence is TTTALTHNDPTEEV. A helical membrane pass occupies residues 60–87; sequence EQLEAAWTVAPIMILILTALPSVRSLYL. Topologically, residues 88-228 are mitochondrial intermembrane; the sequence is MEEVFNPYLT…HFEQWLISEQ (141 aa). Residues histidine 162, cysteine 197, glutamate 199, cysteine 201, histidine 205, and methionine 208 each coordinate Cu cation. Glutamate 199 contributes to the Mg(2+) binding site.

This sequence belongs to the cytochrome c oxidase subunit 2 family. As to quaternary structure, component of the cytochrome c oxidase (complex IV, CIV), a multisubunit enzyme composed of 14 subunits. The complex is composed of a catalytic core of 3 subunits MT-CO1, MT-CO2 and MT-CO3, encoded in the mitochondrial DNA, and 11 supernumerary subunits COX4I, COX5A, COX5B, COX6A, COX6B, COX6C, COX7A, COX7B, COX7C, COX8 and NDUFA4, which are encoded in the nuclear genome. The complex exists as a monomer or a dimer and forms supercomplexes (SCs) in the inner mitochondrial membrane with NADH-ubiquinone oxidoreductase (complex I, CI) and ubiquinol-cytochrome c oxidoreductase (cytochrome b-c1 complex, complex III, CIII), resulting in different assemblies (supercomplex SCI(1)III(2)IV(1) and megacomplex MCI(2)III(2)IV(2)). Found in a complex with TMEM177, COA6, COX18, COX20, SCO1 and SCO2. Interacts with TMEM177 in a COX20-dependent manner. Interacts with COX20. Interacts with COX16. It depends on Cu cation as a cofactor.

The protein localises to the mitochondrion inner membrane. The catalysed reaction is 4 Fe(II)-[cytochrome c] + O2 + 8 H(+)(in) = 4 Fe(III)-[cytochrome c] + 2 H2O + 4 H(+)(out). Component of the cytochrome c oxidase, the last enzyme in the mitochondrial electron transport chain which drives oxidative phosphorylation. The respiratory chain contains 3 multisubunit complexes succinate dehydrogenase (complex II, CII), ubiquinol-cytochrome c oxidoreductase (cytochrome b-c1 complex, complex III, CIII) and cytochrome c oxidase (complex IV, CIV), that cooperate to transfer electrons derived from NADH and succinate to molecular oxygen, creating an electrochemical gradient over the inner membrane that drives transmembrane transport and the ATP synthase. Cytochrome c oxidase is the component of the respiratory chain that catalyzes the reduction of oxygen to water. Electrons originating from reduced cytochrome c in the intermembrane space (IMS) are transferred via the dinuclear copper A center (CU(A)) of subunit 2 and heme A of subunit 1 to the active site in subunit 1, a binuclear center (BNC) formed by heme A3 and copper B (CU(B)). The BNC reduces molecular oxygen to 2 water molecules using 4 electrons from cytochrome c in the IMS and 4 protons from the mitochondrial matrix. The sequence is that of Cytochrome c oxidase subunit 2 (MT-CO2) from Lycodon semicarinatus (Ryukyu odd-tooth snake).